The following is a 175-amino-acid chain: ADP-ribosylation factor 6 (175 aa).

Gly2 is lipidated: N-myristoyl glycine. The N6-myristoyl lysine moiety is linked to residue Lys3. GTP-binding positions include 23–28 (AAGKTT), 41–44 (TIPT), 63–67 (DVGGQ), 122–125 (NKQD), and 155–156 (CA).

Belongs to the small GTPase superfamily. Arf family.

The protein resides in the cytoplasm. It is found in the cytosol. The protein localises to the cell membrane. It localises to the endosome membrane. Its subcellular location is the recycling endosome membrane. The protein resides in the cell projection. It is found in the filopodium membrane. The protein localises to the ruffle. It localises to the cleavage furrow. Its subcellular location is the midbody. The protein resides in the midbody ring. The enzyme catalyses GTP + H2O = GDP + phosphate + H(+). Functionally, GTP-binding protein involved in protein trafficking; regulates endocytic recycling and cytoskeleton remodeling. May modulate vesicle budding and uncoating within the Golgi apparatus. May contribute to the regulation of dendritic branching, filopodia extension and dendritic spine development. In Gallus gallus (Chicken), this protein is ADP-ribosylation factor 6 (ARF6).